A 959-amino-acid polypeptide reads, in one-letter code: Translation initiation factor IF-2 (959 aa).

The segment covering 1-10 (MSDKTNDDKT) has biased composition (basic and acidic residues). Residues 1-374 (MSDKTNDDKT…SQMQETREKI (374 aa)) form a disordered region. Over residues 27–37 (EQSTVRQNFSH) the composition is skewed to polar residues. Composition is skewed to low complexity over residues 63–118 (AAAA…VTKP) and 128–138 (QRPGGQQAQRP). Basic and acidic residues-rich tracts occupy residues 154 to 225 (SEMD…EAAK) and 232 to 241 (ARSERRDDAR). Over residues 246 to 284 (GARPQQAGRPQGGRPQPAGRPQQGSPRPAPIIADAAPIA) the composition is skewed to low complexity. Over residues 318–333 (PEVRAPKVVKGEDDRR) the composition is skewed to basic and acidic residues. A tr-type G domain is found at 457–626 (SRPPVVTIMG…LLQAEMLDLK (170 aa)). The segment at 466 to 473 (GHVDHGKT) is G1. 466–473 (GHVDHGKT) contributes to the GTP binding site. The G2 stretch occupies residues 491–495 (GITQH). The G3 stretch occupies residues 512–515 (DTPG). GTP-binding positions include 512 to 516 (DTPGH) and 566 to 569 (NKID). The interval 566 to 569 (NKID) is G4. Residues 602 to 604 (SAK) form a G5 region.

Belongs to the TRAFAC class translation factor GTPase superfamily. Classic translation factor GTPase family. IF-2 subfamily.

Its subcellular location is the cytoplasm. Its function is as follows. One of the essential components for the initiation of protein synthesis. Protects formylmethionyl-tRNA from spontaneous hydrolysis and promotes its binding to the 30S ribosomal subunits. Also involved in the hydrolysis of GTP during the formation of the 70S ribosomal complex. This chain is Translation initiation factor IF-2, found in Brucella canis (strain ATCC 23365 / NCTC 10854 / RM-666).